A 640-amino-acid chain; its full sequence is Serine/threonine-protein kinase WNG1 (640 aa).

A signal peptide spans 1-70; that stretch reads MPEQDLASGF…GVLCTVEAGA (70 aa). 2 disordered regions span residues 100–222 and 237–280; these read PEVT…AQPT and SHPD…DASN. Residues 104 to 120 show a composition bias toward polar residues; the sequence is HASSEGSPQFESSLSQQ. Residues 124–141 show a composition bias toward basic and acidic residues; that stretch reads RPADRGEAHNGEEPRKDA. The span at 175–186 shows a compositional bias: low complexity; the sequence is QRQASSAAESLA. The segment covering 248–279 has biased composition (basic and acidic residues); the sequence is FSKKQEGRRERRLAVRGDDSFARGHNRDRDAS. One can recognise a Protein kinase domain in the interval 291 to 593; it reads WAKIAALATG…LKQVMEDPYF (303 aa). An ATP-binding site is contributed by K395. D486 functions as the Proton acceptor in the catalytic mechanism. The tract at residues 609–640 is disordered; it reads PFRGDFSIDDPDAGGKMYIPPSKEQDHEQENE. The segment covering 631-640 has biased composition (basic and acidic residues); that stretch reads KEQDHEQENE.

Belongs to the protein kinase superfamily. STE Ser/Thr protein kinase family. WNG subfamily. It depends on Mg(2+) as a cofactor.

It localises to the cytoplasmic granule. Its subcellular location is the secreted. The protein localises to the parasitophorous vacuole lumen. The enzyme catalyses L-seryl-[protein] + ATP = O-phospho-L-seryl-[protein] + ADP + H(+). It carries out the reaction L-threonyl-[protein] + ATP = O-phospho-L-threonyl-[protein] + ADP + H(+). Serine/threonine-protein kinase which, at the tachyzoite stage, phosphorylates several parasitophorous vacuole (PV)-resident proteins such as GRA2, GRA6 and GRA7. By phosphorylating GRA2 and GRA6, regulates the formation of a functional intravacuolar network (IVN); IVN is composed of membranous tubules that bud from the PV membrane into the vacuolar lumen. Plays a role in the establishement of chronic infection in the host by controlling cyst formation in the host tissues. This is Serine/threonine-protein kinase WNG1 from Toxoplasma gondii.